Consider the following 359-residue polypeptide: Gap junction alpha-5 protein (359 aa).

At Met-1–Thr-19 the chain is on the cytoplasmic side. Residues Val-20–Ala-40 form a helical membrane-spanning segment. The Extracellular segment spans residues Ala-41–Arg-76. Residues Tyr-77–Val-97 form a helical membrane-spanning segment. Residues His-98 to Glu-165 are Cytoplasmic-facing. The helical transmembrane segment at Val-166 to Cys-186 threads the bilayer. Topologically, residues Arg-187–Asn-206 are extracellular. A helical membrane pass occupies residues Val-207–Leu-227. Topologically, residues Tyr-228–Val-359 are cytoplasmic. Disordered stretches follow at residues Ser-285–Gln-305 and Arg-317–Val-359. Phosphoserine occurs at positions 354 and 358.

It belongs to the connexin family. Alpha-type (group II) subfamily. In terms of assembly, a connexon is composed of a hexamer of connexins.

It is found in the cell membrane. It localises to the cell junction. The protein resides in the gap junction. One gap junction consists of a cluster of closely packed pairs of transmembrane channels, the connexons, through which materials of low MW diffuse from one cell to a neighboring cell. In Bos taurus (Bovine), this protein is Gap junction alpha-5 protein (GJA5).